A 604-amino-acid chain; its full sequence is FAD-linked oxidoreductase easE (604 aa).

A signal peptide spans 1–25; that stretch reads MQFLLWSTGLVALLSWLIYTQETQS. Residues Asn-47, Asn-70, Asn-106, and Asn-196 are each glycosylated (N-linked (GlcNAc...) asparagine). The FAD-binding PCMH-type domain maps to 125-308; that stretch reads QGRIPLFTVG…TRATMRVFPD (184 aa).

Belongs to the oxygen-dependent FAD-linked oxidoreductase family. Requires FAD as cofactor.

Its pathway is alkaloid biosynthesis; ergot alkaloid biosynthesis. Functionally, FAD-linked oxidoreductase; part of the gene cluster that mediates the biosynthesis of fungal ergot alkaloid. DmaW catalyzes the first step of ergot alkaloid biosynthesis by condensing dimethylallyl diphosphate (DMAP) and tryptophan to form 4-dimethylallyl-L-tryptophan. The second step is catalyzed by the methyltransferase easF that methylates 4-dimethylallyl-L-tryptophan in the presence of S-adenosyl-L-methionine, resulting in the formation of 4-dimethylallyl-L-abrine. The catalase easC and the FAD-dependent oxidoreductase easE then transform 4-dimethylallyl-L-abrine to chanoclavine-I which is further oxidized by easD in the presence of NAD(+), resulting in the formation of chanoclavine-I aldehyde. Chanoclavine-I aldehyde is the precursor of ergoamides and ergopeptines in Clavicipitaceae, and clavine-type alcaloids such as fumiclavine in Trichocomaceae. However, the metabolites downstream of chanoclavine-I aldehyde in Arthrodermataceae have not been identified yet. This chain is FAD-linked oxidoreductase easE, found in Trichophyton verrucosum (strain HKI 0517).